Here is a 386-residue protein sequence, read N- to C-terminus: Patatin-06 (386 aa).

Positions 1–23 (MATTKSFLILFFMILATTSSTCA) are cleaved as a signal peptide. Residues 32-229 (LSIDGGGIKG…TVGDPALLSL (198 aa)) enclose the PNPLA domain. A GXGXXG motif is present at residues 36–41 (GGGIKG). Positions 75–79 (GTSTG) match the GXSXG motif. The active-site Nucleophile is Ser-77. Asn-115 is a glycosylation site (N-linked (GlcNAc...) asparagine). Asp-215 (proton acceptor) is an active-site residue. The short motif at 215–217 (DGG) is the DGA/G element. A coiled-coil region spans residues 321–384 (ENALTGTTTE…NRKKLRANKA (64 aa)).

This sequence belongs to the patatin family. In terms of tissue distribution, tuber.

It localises to the vacuole. Probable lipolytic acyl hydrolase (LAH), an activity which is thought to be involved in the response of tubers to pathogens. The chain is Patatin-06 from Solanum tuberosum (Potato).